The primary structure comprises 245 residues: Probable membrane transporter protein YdhB (245 aa).

A run of 8 helical transmembrane segments spans residues 1-21 (MLIILVMFLLGIILGFIGAGG), 34-56 (HIPIHTALGTSLAGMAFTSLSGA), 71-91 (LIVGGFAAVGSFFGAKLTSFI), 98-118 (YLTAGMLFLSAILILIRLFIL), 137-157 (ILGIAAGVLSGTFGIGSAPFI), 177-197 (MLVIIPLAVGGGIGYITEGFV), 199-219 (YVLLVKVLVGTMCGAYVGAKF), and 225-245 (KVVLKSAIFLTPAIAGLLLLF).

It belongs to the 4-toluene sulfonate uptake permease (TSUP) (TC 2.A.102) family.

The protein resides in the cell membrane. The polypeptide is Probable membrane transporter protein YdhB (ydhB) (Bacillus subtilis (strain 168)).